The sequence spans 174 residues: Large ribosomal subunit protein uL10 (174 aa).

This sequence belongs to the universal ribosomal protein uL10 family. In terms of assembly, part of the ribosomal stalk of the 50S ribosomal subunit. The N-terminus interacts with L11 and the large rRNA to form the base of the stalk. The C-terminus forms an elongated spine to which L12 dimers bind in a sequential fashion forming a multimeric L10(L12)X complex.

Its function is as follows. Forms part of the ribosomal stalk, playing a central role in the interaction of the ribosome with GTP-bound translation factors. The polypeptide is Large ribosomal subunit protein uL10 (Synechococcus sp. (strain RCC307)).